A 258-amino-acid chain; its full sequence is L-rhamnose-1-dehydrogenase (258 aa).

NADP(+)-binding residues include isoleucine 19, aspartate 68, and asparagine 95. Catalysis depends on proton donor residues serine 147 and tyrosine 161. NADP(+) contacts are provided by tyrosine 161, lysine 165, isoleucine 194, and threonine 196. The active-site Lowers pKa of active site Tyr is lysine 165.

It belongs to the short-chain dehydrogenases/reductases (SDR) family.

It carries out the reaction L-rhamnofuranose + NAD(+) = L-rhamnono-1,4-lactone + NADH + H(+). Its function is as follows. NAD-dependent dehydrogenase that has high activity with L-rhamnose and L-lyxose, and shows only low activity with L-mannose. Has no activity with NADP. Catalyzes the first step in an alternative pathway for rhamnose utilization that does not involve phosphorylated intermediates. The protein is L-rhamnose-1-dehydrogenase (DHG2) of Scheffersomyces stipitis (strain ATCC 58785 / CBS 6054 / NBRC 10063 / NRRL Y-11545) (Yeast).